The primary structure comprises 176 residues: R-phycoerythrin beta chain (176 aa).

Phycourobilin is bound by residues Cys-50 and Cys-61. Asn-72 carries the post-translational modification N4-methylasparagine. Positions 82 and 158 each coordinate (2R,3E)-phycoerythrobilin.

This sequence belongs to the phycobiliprotein family. As to quaternary structure, heterodimer of an alpha and a beta chain. In terms of processing, contains two covalently linked phycoerythrobilin chromophores and one covalently linked phycourobilin chromophore.

It localises to the plastid. It is found in the chloroplast thylakoid membrane. Light-harvesting photosynthetic bile pigment-protein from the phycobiliprotein complex. The sequence is that of R-phycoerythrin beta chain (cpeB) from Aglaothamnion neglectum (Red alga).